Here is a 355-residue protein sequence, read N- to C-terminus: Peptide chain release factor 1 (355 aa).

Q233 carries the N5-methylglutamine modification.

The protein belongs to the prokaryotic/mitochondrial release factor family. Methylated by PrmC. Methylation increases the termination efficiency of RF1.

The protein localises to the cytoplasm. Functionally, peptide chain release factor 1 directs the termination of translation in response to the peptide chain termination codons UAG and UAA. The polypeptide is Peptide chain release factor 1 (Rickettsia typhi (strain ATCC VR-144 / Wilmington)).